The primary structure comprises 728 residues: MENMAEEELLPQEKEEAQVRVPTPAPDSAPVPAPAADTALDSAPTPDSDPAPALAPAPAPALSPSLASVPEEAESKRHISIQRRLADLEKLAFGTEGDVDSASSLNSDNPGTENSQTCPLCPKEKFRAYSSHKLRRHLQNLHWKISVEFEGYRMCICHLACRPVKPTIVGEQISSKLGAHYHCIICSATITRRTDMLGHVKRHVNKGETKSRYIAASTAKSSNEILKETDTDIQVFPNYSIPQKTDSYFNPKMKLNRQIIFCTLAALAKERKPLECLDAFGATGIMGLQWAKHLGNAVKVTINDLNENSVTLIQKNCHLNKLKVVVDSEEKEEGDALEDDGTLGDIQVTRMDANVLMHLRSFDFIHLDPFGTSVNYLDSAFRNVRNLGIVSVTSTDISSLYAKAQHVARRHYGCNIVRTEYYKELAARIVVAAVARAAARCNKGIEVLFAVALEHFVLVVVRVLRGPTSADETAKKIQYLIHCQWCEERIFQKDGNMVEENPYRQLPCNCHGSMPGKTAIELGPLWSSSLFNTGFLKRMLFESIHHGLDDIQPLIKTLIFESECTPQSQCSTHAPSNTNKQEENGVFVKTTDDTTIDIYSAQGKRKSNEMAINLAKKQKTDASTAHPPFYYNIHRHSIKGMNMPKLKKFLCCLSQAGFRVSRTHFDPMGIRTDAPLMQFKSILLKYSTPTYTGAQSEGQMPPAAEDTVTDRVEMSVSDKAEASGCRRW.

Acidic residues predominate over residues 1-10 (MENMAEEELL). Disordered stretches follow at residues 1-78 (MENM…SKRH) and 98-118 (DVDS…SQTC). Thr-23 bears the Phosphothreonine mark. Positions 23-33 (TPAPDSAPVPA) are enriched in pro residues. Residues 34-46 (PAADTALDSAPTP) are compositionally biased toward low complexity. A compositionally biased stretch (pro residues) spans 47 to 61 (DSDPAPALAPAPAPA). Ser-63 carries the phosphoserine modification. The segment covering 101–118 (SASSLNSDNPGTENSQTC) has biased composition (polar residues). Positions 132–136 (HKLRR) match the Nucleolar localization signal motif. A C2H2-type zinc finger spans residues 181-203 (YHCIICSATITRRTDMLGHVKRH). In terms of domain architecture, Trm1 methyltransferase spans 224–683 (EILKETDTDI…APLMQFKSIL (460 aa)). Residues Arg-257, Asp-304, Asp-352, and Ala-353 each coordinate S-adenosyl-L-methionine. Positions 483, 486, 508, and 510 each coordinate Zn(2+). Lys-580 participates in a covalent cross-link: Glycyl lysine isopeptide (Lys-Gly) (interchain with G-Cter in SUMO2). Phosphoserine is present on Ser-607. Residues 693 to 728 (GAQSEGQMPPAAEDTVTDRVEMSVSDKAEASGCRRW) form a disordered region. Residues 708–721 (VTDRVEMSVSDKAE) show a composition bias toward basic and acidic residues.

This sequence belongs to the class I-like SAM-binding methyltransferase superfamily. Trm1 family. As to expression, expressed in various neuronal structures during embryonic development, including spinal ganglia, trigeminal nerve and ganglion, olfactory and nasopharyngeal epithelium, nuclei of the metencephalon, thalamus and medulla oblongata. Also expressed in lung, esophagus, epiglottis, ependyma, vertebral column, spinal cord and brown adipose tissue. Expression persists in the adult brain with dynamically changing patterns in cortex and cerebellum.

It localises to the nucleus. The protein localises to the nucleolus. It catalyses the reaction guanosine(27) in tRNA(Tyr) + 2 S-adenosyl-L-methionine = N(2)-dimethylguanosine(27) in tRNA(Tyr) + 2 S-adenosyl-L-homocysteine + 2 H(+). Specifically dimethylates a single guanine residue at position 27 of tRNA(Tyr) using S-adenosyl-L-methionine as donor of the methyl groups. Dimethylation at position 27 of tRNA(Tyr) is required for efficient translation of tyrosine codons. Also required to maintain 3-(3-amino-3-carboxypropyl)uridine (acp3U) in the D-loop of several cytoplasmic tRNAs. May play a role in motor coordination and exploratory behavior. The polypeptide is tRNA (guanine(27)-N(2))-dimethyltransferase (Mus musculus (Mouse)).